The sequence spans 570 residues: Serine/threonine-protein kinase Pink1, mitochondrial (570 aa).

A mitochondrion-targeting transit peptide spans 1–5 (MSVRA). The Mitochondrial intermembrane segment spans residues 6–96 (VGSRLFKHGR…AELRKKATRR (91 aa)). A helical membrane pass occupies residues 97-120 (ILFGDSAPFFALVGVSIASGTGIL). The Cytoplasmic segment spans residues 121–570 (TKEEELEGVC…WIQENLPELD (450 aa)). In terms of domain architecture, Protein kinase spans 162 to 484 (LSLGKPIAKG…VAANVCQLFL (323 aa)). An ATP-binding site is contributed by Lys-196. Residue Ser-205 is modified to Phosphoserine; by autocatalysis. Glu-217 provides a ligand contact to Mg(2+). Positions 295, 297, and 300 each coordinate ATP. Asp-337 functions as the Proton acceptor in the catalytic mechanism. Asp-341 contributes to the ATP binding site. The Mg(2+) site is built by Asn-342 and Asp-359. Residue Asp-359 coordinates ATP. Ser-377 is subject to Phosphoserine; by autocatalysis. Thr-386 carries the phosphothreonine; by autocatalysis modification. The residue at position 530 (Thr-530) is a Phosphothreonine.

This sequence belongs to the protein kinase superfamily. Ser/Thr protein kinase family. Mg(2+) serves as cofactor. Proteolytically cleaved. In healthy cells, the precursor is continuously imported into mitochondria where it is proteolytically cleaved into its short form by the mitochondrial rhomboid protease rho-7 (TcasGA2_TC013516). The short form is then released into the cytosol where it rapidly undergoes proteasome-dependent degradation. In unhealthy cells, when cellular stress conditions lead to the loss of mitochondrial membrane potential, mitochondrial import is impaired leading to the precursor accumulating on the outer mitochondrial membrane (OMM). In terms of processing, autophosphorylated on Ser-205, which activates kinase activity and is required for substrate recognition. Loss of mitochondrial membrane potential results in the precursor accumulating on the outer mitochondrial membrane (OMM) where it is activated by autophosphorylation at Ser-205. Autophosphorylation is sufficient and essential for selective recruitment of park to depolarized mitochondria, likely via Pink1-dependent phosphorylation of polyubiquitin chains. Also autophosphorylated at Ser-377, Thr-386 and possibly Thr-530. Another report found evidence of autophosphorylation at Ser-154, Thr-186, Thr-218, Ser-267 and Thr-530, as well as a number of other minor sites, but determined that phosphorylation at these sites is not required for enzyme activity and may not occur in vivo.

The protein resides in the mitochondrion outer membrane. Its subcellular location is the mitochondrion inner membrane. It is found in the cytoplasm. The protein localises to the cytosol. It carries out the reaction L-seryl-[protein] + ATP = O-phospho-L-seryl-[protein] + ADP + H(+). The catalysed reaction is L-threonyl-[protein] + ATP = O-phospho-L-threonyl-[protein] + ADP + H(+). Acts as a serine/threonine-protein kinase. Exhibits a substrate preference for proline at position P+1 and a general preference at several residues for basic residues such as arginine. Also exhibits moderate preferences for a phosphotyrosine at position P-3 and a tryptophan at P-5. Critical to mitochondrial homeostasis it mediates several pathways that maintain mitochondrial health and function. Protects against mitochondrial dysfunction during cellular stress by phosphorylating mitochondrial proteins such as park and likely Drp1, to coordinate mitochondrial quality control mechanisms that remove and replace dysfunctional mitochondrial components. Depending on the severity of mitochondrial damage and/or dysfunction, activity ranges from preventing apoptosis and stimulating mitochondrial biogenesis to regulating mitochondrial dynamics and eliminating severely damaged mitochondria via mitophagy. Appears to be particularly important in maintaining the physiology and function of cells with high energy demands that are undergoing stress or altered metabolic environment, including spermatids, muscle cells and neurons such as the dopaminergic (DA) neurons. Mediates the translocation and activation of park at the outer membrane (OMM) of dysfunctional/depolarized mitochondria. At the OMM of damaged mitochondria, phosphorylates pre-existing polyubiquitin chains, the Pink1-phosphorylated polyubiquitin then recruits park from the cytosol to the OMM where park is fully activated by phosphorylation at 'Ser-80' by Pink1. When cellular stress results in irreversible mitochondrial damage, functions with park to promote the clearance of dysfunctional and/or depolarized mitochondria by selective autophagy (mitophagy). The Pink1-park pathway also promotes fission and/or inhibits fusion of damaged mitochondria, by phosphorylating and thus promoting the park-dependent degradation of proteins involved in mitochondrial fusion/fission such as Marf, Opa1 and fzo. This prevents the refusion of unhealthy mitochondria with the mitochondrial network or initiates mitochondrial fragmentation facilitating their later engulfment by autophagosomes. Also likely to promote mitochondrial fission independently of park and Atg7-mediated mitophagy, via the phosphorylation and activation of Drp1. Regulates motility of damaged mitochondria by phosphorylating Miro which likely promotes its park-dependent degradation by the proteasome; in motor neurons, this inhibits mitochondrial intracellular anterograde transport along the axons which probably increases the chance of the mitochondria being eliminated in the soma. The Pink1-park pathway is also involved in mitochondrial regeneration processes such as promoting mitochondrial biogenesis, activating localized mitochondrial repair, promoting selective turnover of mitochondrial proteins and initiating the mitochondrial import of endogenous proteins. Involved in mitochondrial biogenesis by promoting the park-dependent ubiquitination of transcriptional repressor Paris which leads to its subsequent proteasomal degradation and allows activation of the transcription factor srl. Functions with park to promote localized mitochondrial repair by activating the translation of specific nuclear-encoded mitochondrial RNAs (nc-mtRNAs) on the mitochondrial surface, including several key electron transport chain component nc-mtRNAs. During oogenesis, phosphorylates and inactivates larp on the membrane of defective mitochondria, thus impairing local translation and mtDNA replication and consequently, reducing transmission of deleterious mtDNA mutations to the mature oocyte. Phosphorylates the mitochondrial acyl-CoA dehydrogenase Mcad, and appears to be important for maintaining fatty acid and amino acid metabolism via a mechanism that is independent of it's role in maintaining production of ATP. The sequence is that of Serine/threonine-protein kinase Pink1, mitochondrial from Tribolium castaneum (Red flour beetle).